A 135-amino-acid polypeptide reads, in one-letter code: T-cell receptor gamma chain V region V108A (135 aa).

An N-terminal signal peptide occupies residues 1-18 (MLLLRWFTSCCLWVFGLG). Residues 19–116 (QLEQTELSVT…EATYYCAVWM (98 aa)) are v segment. A j segment region spans residues 117-135 (RWSSGFHKVFAEGTKLIVI).

This chain is T-cell receptor gamma chain V region V108A, found in Mus musculus (Mouse).